Here is a 766-residue protein sequence, read N- to C-terminus: 5-methyltetrahydropteroyltriglutamate--homocysteine methyltransferase (766 aa).

5-methyltetrahydropteroyltri-L-glutamate is bound by residues 16-19 (RELK) and Lys-119. L-homocysteine contacts are provided by residues 440-442 (IGS) and Glu-493. L-methionine-binding positions include 440–442 (IGS) and Glu-493. 5-methyltetrahydropteroyltri-L-glutamate-binding positions include 524–525 (RC) and Trp-570. An L-homocysteine-binding site is contributed by Asp-608. Asp-608 is an L-methionine binding site. A 5-methyltetrahydropteroyltri-L-glutamate-binding site is contributed by Glu-614. Residues His-650, Cys-652, and Glu-674 each contribute to the Zn(2+) site. His-703 functions as the Proton donor in the catalytic mechanism. Cys-735 serves as a coordination point for Zn(2+).

Belongs to the vitamin-B12 independent methionine synthase family. Zn(2+) is required as a cofactor.

The enzyme catalyses 5-methyltetrahydropteroyltri-L-glutamate + L-homocysteine = tetrahydropteroyltri-L-glutamate + L-methionine. It participates in amino-acid biosynthesis; L-methionine biosynthesis via de novo pathway; L-methionine from L-homocysteine (MetE route): step 1/1. Its function is as follows. Catalyzes the transfer of a methyl group from 5-methyltetrahydrofolate to homocysteine resulting in methionine formation. This is 5-methyltetrahydropteroyltriglutamate--homocysteine methyltransferase from Pseudomonas aeruginosa (strain UCBPP-PA14).